The following is a 148-amino-acid chain: Arginine repressor (148 aa).

This sequence belongs to the ArgR family.

The protein resides in the cytoplasm. It participates in amino-acid biosynthesis; L-arginine biosynthesis [regulation]. Functionally, regulates arginine biosynthesis genes. This Chlorobium phaeovibrioides (strain DSM 265 / 1930) (Prosthecochloris vibrioformis (strain DSM 265)) protein is Arginine repressor.